A 375-amino-acid chain; its full sequence is 23S rRNA (uracil(747)-C(5))-methyltransferase RlmC (375 aa).

[4Fe-4S] cluster is bound by residues Cys-3, Cys-11, Cys-14, and Cys-87. S-adenosyl-L-methionine-binding residues include Gln-212, Phe-241, Glu-262, and Asn-307. Cys-334 functions as the Nucleophile in the catalytic mechanism.

Belongs to the class I-like SAM-binding methyltransferase superfamily. RNA M5U methyltransferase family. RlmC subfamily.

The enzyme catalyses uridine(747) in 23S rRNA + S-adenosyl-L-methionine = 5-methyluridine(747) in 23S rRNA + S-adenosyl-L-homocysteine + H(+). Functionally, catalyzes the formation of 5-methyl-uridine at position 747 (m5U747) in 23S rRNA. The sequence is that of 23S rRNA (uracil(747)-C(5))-methyltransferase RlmC from Cronobacter sakazakii (strain ATCC BAA-894) (Enterobacter sakazakii).